We begin with the raw amino-acid sequence, 250 residues long: Triosephosphate isomerase (250 aa).

9–11 (NWK) lines the substrate pocket. The Electrophile role is filled by H96. E166 functions as the Proton acceptor in the catalytic mechanism. Substrate is bound by residues G172, S212, and 233–234 (GG).

This sequence belongs to the triosephosphate isomerase family. Homodimer.

The protein resides in the cytoplasm. The catalysed reaction is D-glyceraldehyde 3-phosphate = dihydroxyacetone phosphate. Its pathway is carbohydrate biosynthesis; gluconeogenesis. The protein operates within carbohydrate degradation; glycolysis; D-glyceraldehyde 3-phosphate from glycerone phosphate: step 1/1. Functionally, involved in the gluconeogenesis. Catalyzes stereospecifically the conversion of dihydroxyacetone phosphate (DHAP) to D-glyceraldehyde-3-phosphate (G3P). The chain is Triosephosphate isomerase from Chlorobium phaeovibrioides (strain DSM 265 / 1930) (Prosthecochloris vibrioformis (strain DSM 265)).